A 179-amino-acid polypeptide reads, in one-letter code: Peroxiredoxin (179 aa).

The region spanning 2–152 is the Thioredoxin domain; it reads TMEKQVPIVT…VEGWFEEEGF (151 aa). Cys-56 acts as the Cysteine sulfenic acid (-SOH) intermediate (for peroxiredoxin activity) in catalysis.

Belongs to the peroxiredoxin family. Prx5 subfamily. Monomer.

It carries out the reaction a hydroperoxide + 2 glutathione = an alcohol + glutathione disulfide + H2O. Thiol-specific peroxidase that catalyzes the reduction of hydrogen peroxide and organic hydroperoxides to water and alcohols, respectively. Plays a role in cell protection against oxidative stress by detoxifying peroxides. This Rhizobium etli protein is Peroxiredoxin.